The chain runs to 699 residues: DNA ligase (699 aa).

The disordered stretch occupies residues 1–20 (MTVQKPIESLSPAQAKREHR). NAD(+) is bound by residues 43 to 47 (DAEYD), 92 to 93 (SL), and E126. The active-site N6-AMP-lysine intermediate is the K128. The NAD(+) site is built by R149, E185, K301, and K325. Residues C419, C422, C443, and C449 each coordinate Zn(2+). A BRCT domain is found at 621 to 699 (AKESPVAGKT…EEDWLKLVGE (79 aa)).

The protein belongs to the NAD-dependent DNA ligase family. LigA subfamily. Mg(2+) is required as a cofactor. Requires Mn(2+) as cofactor.

The enzyme catalyses NAD(+) + (deoxyribonucleotide)n-3'-hydroxyl + 5'-phospho-(deoxyribonucleotide)m = (deoxyribonucleotide)n+m + AMP + beta-nicotinamide D-nucleotide.. Its function is as follows. DNA ligase that catalyzes the formation of phosphodiester linkages between 5'-phosphoryl and 3'-hydroxyl groups in double-stranded DNA using NAD as a coenzyme and as the energy source for the reaction. It is essential for DNA replication and repair of damaged DNA. This chain is DNA ligase, found in Beijerinckia indica subsp. indica (strain ATCC 9039 / DSM 1715 / NCIMB 8712).